We begin with the raw amino-acid sequence, 726 residues long: MSNESKCPFKHTAGEGTSNRDWWPGQLNLKILHQHSRLSDPMAEGFDYAAEFKTLDLAAVKRDLQALMTDSQPWWPADFGHYGPLFIRMAWHSAGTYRIADGRGGAGGGQQRFAPLNSWPDNVSLDKARRLIWPIKQKYGRKISWADLIILTGNVALESMGFKTFGFAGGRQDVWEPEDNVYWGSETTWLDDQRYSGDRELENPLGAVQMGLIYVNPEGPNGNPDPLAAARDIRETFARMAMDDEETVALIAGGHTFGKTHGAGPATHVGPEPEAAGLEEQGLGWKSSFGTGVGGDAITSGLEVIWTTTPTRWSNDFFDHLFGYEWELTTSPAGAHQWRPKAGAGADSVPDPHDPNKRRTPSMLTTDLSLRFDPAYEAISRRFHEHPEQLAEAFSRAWFKLTHRDMGPRARYLGPEVPAEELIWQDPIPAVNHPLIDAQDIQQLKGQILNSGLSVAQLVSTAWASASTFRGSDKRGGANGARIRLAPQKDWEVNQPQQLAQVLQGLEALQSAFNSAQSTGKRVSLADLIVLGGCAAVELAAKNAGYSISVPFAPGRMDASQEQTDVESFAVLEPVADGFRNYLKPVSGITAEALLVDRAQLLTLTAPQLTVLLGGLRVLGANVGQSPHGVFTSRPGTLSNDFFVNLLDMGTQWKPQSEARDLYEGSDRATGQYKWSGTRVDLLLGSNSQLRALAEVYAAADAGEQFVKDFVAAWDKVMNLDRFDLR.

The tryptophyl-tyrosyl-methioninium (Trp-Tyr) (with M-240) cross-link spans 91 to 214; that stretch reads WHSAGTYRIA…LGAVQMGLIY (124 aa). His-92 serves as the catalytic Proton acceptor. Residues 214–240 constitute a cross-link (tryptophyl-tyrosyl-methioninium (Tyr-Met) (with W-91)); the sequence is YVNPEGPNGNPDPLAAARDIRETFARM. His-255 lines the heme b pocket. A disordered region spans residues 335-362; it reads AHQWRPKAGAGADSVPDPHDPNKRRTPS.

This sequence belongs to the peroxidase family. Peroxidase/catalase subfamily. Homodimer or homotetramer. The cofactor is heme b. Formation of the three residue Trp-Tyr-Met cross-link is important for the catalase, but not the peroxidase activity of the enzyme.

The catalysed reaction is H2O2 + AH2 = A + 2 H2O. It carries out the reaction 2 H2O2 = O2 + 2 H2O. Bifunctional enzyme with both catalase and broad-spectrum peroxidase activity. The sequence is that of Catalase-peroxidase from Pseudomonas fluorescens (strain ATCC BAA-477 / NRRL B-23932 / Pf-5).